We begin with the raw amino-acid sequence, 412 residues long: CinA-like protein (412 aa).

Belongs to the CinA family.

The protein is CinA-like protein of Kosmotoga olearia (strain ATCC BAA-1733 / DSM 21960 / TBF 19.5.1).